The chain runs to 107 residues: U1-lycotoxin-Ls1s (107 aa).

An N-terminal signal peptide occupies residues 1-20 (MMKVLVVVALLVTLISYSSS). A propeptide spanning residues 21–41 (EGIDDLEADELLSLMANEQTR) is cleaved from the precursor. Cystine bridges form between C44–C59, C51–C68, C58–C86, and C70–C84.

The protein belongs to the neurotoxin 19 (CSTX) family. 04 (U1-Lctx) subfamily. In terms of tissue distribution, expressed by the venom gland.

Its subcellular location is the secreted. The polypeptide is U1-lycotoxin-Ls1s (Lycosa singoriensis (Wolf spider)).